The sequence spans 510 residues: Histone deacetylase 3 (510 aa).

The tract at residues 24–338 is histone deacetylase; it reads RRVCYFYDPE…WCYETGVALG (315 aa). His158 serves as the catalytic Proton donor/acceptor. 3 residues coordinate Zn(2+): Asp193, His195, and Asp281. Residues 394–510 are disordered; the sequence is PSVQFQERIP…ARNEPGSSPK (117 aa). Basic and acidic residues-rich tracts occupy residues 418-434 and 448-472; these read DERH…DHKP and VKRE…HKGP. The segment covering 485-503 has biased composition (low complexity); the sequence is APTADANAVAVNAPGNARN.

The protein belongs to the histone deacetylase family. HD Type 1 subfamily. Requires Zn(2+) as cofactor. As to expression, expressed in roots.

It is found in the nucleus. It carries out the reaction N(6)-acetyl-L-lysyl-[histone] + H2O = L-lysyl-[histone] + acetate. In terms of biological role, responsible for the deacetylation of lysine residues on the N-terminal part of the core histones (H2A, H2B, H3 and H4). Histone deacetylation gives a tag for epigenetic repression and plays an important role in transcriptional regulation, cell cycle progression and developmental events. Histone deacetylases act via the formation of large multiprotein complexes. The polypeptide is Histone deacetylase 3 (Oryza sativa subsp. japonica (Rice)).